Reading from the N-terminus, the 396-residue chain is Maltose/maltodextrin-binding periplasmic protein (396 aa).

The first 26 residues, 1 to 26, serve as a signal peptide directing secretion; sequence MKIKTGVGILALSALTTMMISAPALA.

It belongs to the bacterial solute-binding protein 1 family. As to quaternary structure, the complex is composed of two ATP-binding proteins (MalK), two transmembrane proteins (MalG and MalF) and a solute-binding protein (MalE).

The protein localises to the periplasm. Its function is as follows. Part of the ABC transporter complex MalEFGK involved in maltose/maltodextrin import. Binds maltose and higher maltodextrins. The chain is Maltose/maltodextrin-binding periplasmic protein (malE) from Salmonella typhimurium (strain LT2 / SGSC1412 / ATCC 700720).